The primary structure comprises 305 residues: MTNQYSILFKQEQAHDDAIWSVAWETNKKENIETVVTGSLDDLVKVWKWRDERLELQWSLEGHQLGVVSVDISHTLPIAASSSLDAHIRLWDLENGKQMKSIDAGPVDAWTLAFSPDSQHLATGTHMGKVNIFGVESGKKEYSLDTRGKFILSIAYSPDGKYLASGAIDGIINIFDIATGKLLHTLEGHAMPIRSLTFSPDSQLLVTASDDGYIKIYDVQHANLAGTLSGHASWVLNVAFCPDDTHFVSSSSDKSVKVWDVGTRTCIHTFFDHQDQVWGVKYNGNGSKIVSVGDDQEIHVYDCPI.

Residue M1 is modified to N-acetylmethionine. T2 carries the post-translational modification N-acetylthreonine; in WD repeat-containing protein 61, N-terminally processed. WD repeat units follow at residues 14–57 (AHDD…LELQ), 62–101 (GHQL…QMKS), 104–143 (AGPV…KEYS), 146–187 (TRGK…HTLE), 188–227 (GHAM…LAGT), 230–269 (GHAS…CIHT), and 272–305 (DHQD…DCPI).

This sequence belongs to the SKI8 family. As to quaternary structure, component of the PAF1 complex, which consists of CDC73, PAF1, LEO1, CTR9, RTF1 and SKIC8. The PAF1 complex interacts with PHF5A. Within the PAF1 complex interacts directly with PHF5A. Component of the SKI complex which consists of SKIC2, SKIC3 and SKIC8.

The protein resides in the nucleus. It is found in the cytoplasm. Functionally, component of the PAF1 complex (PAF1C) which has multiple functions during transcription by RNA polymerase II and is implicated in regulation of development and maintenance of embryonic stem cell pluripotency. PAF1C associates with RNA polymerase II through interaction with POLR2A CTD non-phosphorylated and 'Ser-2'- and 'Ser-5'-phosphorylated forms and is involved in transcriptional elongation, acting both independently and synergistically with TCEA1 and in cooperation with the DSIF complex and HTATSF1. PAF1C is required for transcription of Hox and Wnt target genes. PAF1C is involved in hematopoiesis and stimulates transcriptional activity of KMT2A/MLL1; it promotes leukemogenesis through association with KMT2A/MLL1-rearranged oncoproteins, such as KMT2A/MLL1-MLLT3/AF9 and KMT2A/MLL1-MLLT1/ENL. PAF1C is involved in histone modifications such as ubiquitination of histone H2B and methylation on histone H3 'Lys-4' (H3K4me3). PAF1C recruits the RNF20/40 E3 ubiquitin-protein ligase complex and the E2 enzyme UBE2A or UBE2B to chromatin which mediate monoubiquitination of 'Lys-120' of histone H2B (H2BK120ub1); UB2A/B-mediated H2B ubiquitination is proposed to be coupled to transcription. PAF1C is involved in mRNA 3' end formation probably through association with cleavage and poly(A) factors. In case of infection by influenza A strain H3N2, PAF1C associates with viral NS1 protein, thereby regulating gene transcription. Required for mono- and trimethylation on histone H3 'Lys-4' (H3K4me3), dimethylation on histone H3 'Lys-79' (H3K4me3). Required for Hox gene transcription. Also acts as a component of the SKI complex, a multiprotein complex that assists the RNA-degrading exosome during the mRNA decay and quality-control pathways. The SKI complex catalyzes mRNA extraction from 80S ribosomal complexes in the 3'-5' direction and channels mRNA to the cytosolic exosome for degradation. SKI-mediated extraction of mRNA from stalled ribosomes allow binding of the Pelota-HBS1L complex and subsequent ribosome disassembly by ABCE1 for ribosome recycling. This is Superkiller complex protein 8 (Skic8) from Rattus norvegicus (Rat).